Reading from the N-terminus, the 215-residue chain is MNVEMFDFSIYISFFFSLFALVNPIGMIPIFTSMTNHQSIVERNKTNLIANFSVAIILSISLIFGSFILNLFGISINSFRISGGILVMIIAISMINGNFINNINNQKNGKLDKDIARNISIVPLAMPLIAGPGAISSTIVWSTHYSSVENIFGCMVTIMLFSCFCWTLFKVSPIIVDILGRTGINIMTRIMGLLLMSLGIEFILAGLKASCSNYF.

Transmembrane regions (helical) follow at residues 10–32 (IYIS…PIFT), 52–74 (FSVA…LFGI), 78–100 (SFRI…GNFI), 119–141 (ISIV…TIVW), 151–169 (IFGC…WTLF), and 190–207 (IMGL…LAGL).

It belongs to the UPF0056 (MarC) family.

It localises to the cell membrane. This Buchnera aphidicola subsp. Baizongia pistaciae (strain Bp) protein is UPF0056 membrane protein bbp_248.